The sequence spans 249 residues: Tetraspanin-18 (249 aa).

Residues 1-13 (MEGDCLSCMKYLM) are Cytoplasmic-facing. A helical membrane pass occupies residues 14 to 34 (FVFNFFIFLGGACLLGIGIWV). Over 35–49 (MVDPTGFREIVAANP) the chain is Extracellular. Residues 50–70 (LLITGAYILLAMGGLLFLLGF) form a helical membrane-spanning segment. The Cytoplasmic segment spans residues 71–83 (LGCCGAVRENKCL). The chain crosses the membrane as a helical span at residues 84–104 (LLFFFLFILIIFLAELSAAIL). The Extracellular segment spans residues 105–223 (AFIFRGNLTR…AFETYVYLAG (119 aa)). N-linked (GlcNAc...) asparagine glycans are attached at residues Asn-111 and Asn-129. Residues 224-244 (ALAIGVLAIELFAMIFAMCLF) form a helical membrane-spanning segment. The Cytoplasmic segment spans residues 245–249 (RGIIQ).

The protein belongs to the tetraspanin (TM4SF) family. In terms of assembly, interacts with ORAI1; this interaction regulates ORAI1 exit from the endoplasmic (ER), and/or Golgi, and trafficking to the cell surface.

It is found in the membrane. Plays a role in the cell surface localization of ORAI1 and may participate in the regulation of Ca(2+) signaling and the VWF release in response to inflammatory stimuli. The chain is Tetraspanin-18 from Bos taurus (Bovine).